The chain runs to 504 residues: Sphingosine-1-phosphate transporter SPNS2 (504 aa).

11 consecutive transmembrane segments (helical) span residues 48-70, 94-114, 122-142, 182-202, 214-234, 269-289, 317-337, 351-371, 375-395, 415-435, and 460-480; these read LLRCRTPLVAAGILSFGNVLNYM, GLLQTVFICSFMVAAPIFGYL, IILSCGIFFWSAVTLLSSFIT, VMLSVFYLAIPLGSGLGYILG, WALRVSPMLGLTAGTLILIFV, VFSSLASAAVSFATGAFGIWI, LIFGAITCVTGLLGVVIGAVT, LVCAVSMLGSAIFICLIFVVA, IVGAYICIFIGETLLFLNWAI, FQGFTSHLLGDAGSPYLIGLI, and LCPFVIVLGGMFFLATALFFL.

This sequence belongs to the major facilitator superfamily. Spinster (TC 2.A.1.49) family.

It is found in the cell membrane. It localises to the endosome membrane. It catalyses the reaction sphing-4-enine 1-phosphate(in) = sphing-4-enine 1-phosphate(out). It carries out the reaction sphinganine 1-phosphate(in) = sphinganine 1-phosphate(out). Functionally, lipid transporter that specifically mediates export of sphingosine-1-phosphate (sphing-4-enine 1-phosphate, S1P) and sphinganine-1-phosphate, which play critical roles in regulating heart development. Mediates the export of S1P from cells in the extraembryonic yolk syncytial layer (YSL), thereby regulating myocardial precursor migration. This is Sphingosine-1-phosphate transporter SPNS2 from Danio rerio (Zebrafish).